Here is a 259-residue protein sequence, read N- to C-terminus: Ubiquinol-cytochrome c reductase complex assembly factor 1 (259 aa).

The protein belongs to the CBP3 family. Interacts with sloth1; the interaction is probably involved in the assembly and stability of the mitochondrial ubiquinol-cytochrome c reductase complex.

The protein resides in the mitochondrion inner membrane. Its function is as follows. Required for the assembly of the ubiquinol-cytochrome c reductase complex (mitochondrial respiratory chain complex III or cytochrome b-c1 complex). May be involved in cytochrome b translation and/or stability. In Drosophila melanogaster (Fruit fly), this protein is Ubiquinol-cytochrome c reductase complex assembly factor 1.